Reading from the N-terminus, the 325-residue chain is Helicase VP6-A (325 aa).

2 disordered regions span residues 1 to 126 (MLLA…TNGR) and 175 to 231 (GVAE…PARI). Composition is skewed to basic and acidic residues over residues 8–18 (VIKRSSEELKQ), 32–54 (EGGK…KDGE), 61–79 (GQKE…DRRI), and 92–105 (PGER…RGDG). K106 serves as a coordination point for ATP. Positions 106-122 (KVGGGGGDADAGVGATG) are enriched in gly residues. A compositionally biased stretch (basic and acidic residues) spans 175 to 229 (GVAEQTERLRDLRRKEKNGTHAKAVERGGRKQRKESHGDAQREGVEEEKTSEEPA).

This sequence belongs to the orbivirus VP6 family. In terms of assembly, homohexamer.

It is found in the virion. It catalyses the reaction ATP + H2O = ADP + phosphate + H(+). Functionally, ATP dependent RNA helicase essential for RNA packaging and viral transcription. Possesses ss- and dsRNA-binding capacity. In Bluetongue virus 11 (isolate USA) (BTV 11), this protein is Helicase VP6-A (Segment-9).